Here is a 213-residue protein sequence, read N- to C-terminus: Phosphatidylcholine transfer protein (213 aa).

M1 carries the post-translational modification N-acetylmethionine. The region spanning 1 to 212 (MDPGAGAFSE…MVKACQNYKK (212 aa)) is the START domain. Residues Y72 and R78 each contribute to the a 1,2-diacyl-sn-glycero-3-phosphocholine site. Residue S139 is modified to Phosphoserine. Q157 contributes to the a 1,2-diacyl-sn-glycero-3-phosphocholine binding site. The part of the binding site for phosphatidylcholine stretch occupies residues 171 to 176 (VFMYYF).

As to quaternary structure, interacts with ACOT13/THEM2.

It is found in the cytoplasm. Functionally, catalyzes the transfer of phosphatidylcholine between membranes. Binds phosphatidylcholine in a tight 1:1 stoichiometric complex. This chain is Phosphatidylcholine transfer protein (PCTP), found in Bos taurus (Bovine).